Consider the following 83-residue polypeptide: U25-theraphotoxin-Cg1b (83 aa).

A signal peptide spans 1–23 (MRFHTLLFLSFLLLVSCALICTA). Positions 24 to 48 (QHPGLEKSGMFHENVGKGQHIEEKR) are excised as a propeptide. Intrachain disulfides connect cysteine 50–cysteine 66, cysteine 57–cysteine 71, and cysteine 65–cysteine 79.

This sequence belongs to the neurotoxin 07 (Beta/delta-agtx) family. 03 (aga-4) subfamily. JZTX sub-subfamily. In terms of tissue distribution, expressed by the venom gland.

The protein localises to the secreted. Its function is as follows. Probable ion channel inhibitor. This chain is U25-theraphotoxin-Cg1b, found in Chilobrachys guangxiensis (Chinese earth tiger tarantula).